We begin with the raw amino-acid sequence, 232 residues long: MGPSVLPAWLQPRYRKNVYLFIYYLIQFCGHSWILANMTVRFFSFGKDSMADTFYAIGLVMRVCQSISLLELLHIYIGIESNQLFPRFLQLTERVIILFGVITSQEEVQEKCVVCVLFILWNLLDMVRYTYSMLSVIGTSYAALTWLSQTLWMPIYPLCVLAEAFTIYQSLPYFESFGTNSTVLPFDLSTCFPYVLKLYLMMLFIGMYFTYSHLYTERKDFLRVFSVKQKNV.

Residues 1-19 (MGPSVLPAWLQPRYRKNVY) lie on the Cytoplasmic side of the membrane. The helical transmembrane segment at 20 to 40 (LFIYYLIQFCGHSWILANMTV) threads the bilayer. Topologically, residues 41-56 (RFFSFGKDSMADTFYA) are lumenal. The chain crosses the membrane as a helical span at residues 57–77 (IGLVMRVCQSISLLELLHIYI). The Cytoplasmic portion of the chain corresponds to 78-112 (GIESNQLFPRFLQLTERVIILFGVITSQEEVQEKC). A helical transmembrane segment spans residues 113–133 (VVCVLFILWNLLDMVRYTYSM). The Lumenal segment spans residues 134 to 135 (LS). Residues 136 to 156 (VIGTSYAALTWLSQTLWMPIY) form a helical membrane-spanning segment. Tyr-156 is a catalytic residue. Pro-157 is a topological domain (cytoplasmic). The chain crosses the membrane as a helical span at residues 158-178 (LCVLAEAFTIYQSLPYFESFG). Glu-163 is an active-site residue. The Lumenal segment spans residues 179-189 (TNSTVLPFDLS). The helical transmembrane segment at 190-210 (TCFPYVLKLYLMMLFIGMYFT) threads the bilayer. At 211–232 (YSHLYTERKDFLRVFSVKQKNV) the chain is on the cytoplasmic side.

The protein belongs to the very long-chain fatty acids dehydratase HACD family. As to quaternary structure, may interact with enzymes of the ELO family (including ELOVL1); with those enzymes that mediate condensation, the first of the four steps of the reaction cycle responsible for fatty acids elongation, may be part of a larger fatty acids elongase complex.

The protein localises to the endoplasmic reticulum membrane. It catalyses the reaction a very-long-chain (3R)-3-hydroxyacyl-CoA = a very-long-chain (2E)-enoyl-CoA + H2O. The enzyme catalyses (3R)-hydroxyhexadecanoyl-CoA = (2E)-hexadecenoyl-CoA + H2O. It functions in the pathway lipid metabolism; fatty acid biosynthesis. Catalyzes the third of the four reactions of the long-chain fatty acids elongation cycle. This endoplasmic reticulum-bound enzymatic process, allows the addition of two carbons to the chain of long- and very long-chain fatty acids/VLCFAs per cycle. This enzyme catalyzes the dehydration of the 3-hydroxyacyl-CoA intermediate into trans-2,3-enoyl-CoA, within each cycle of fatty acid elongation. Thereby, it participates in the production of VLCFAs of different chain lengths that are involved in multiple biological processes as precursors of membrane lipids and lipid mediators. In Mus musculus (Mouse), this protein is Very-long-chain (3R)-3-hydroxyacyl-CoA dehydratase 4.